Reading from the N-terminus, the 90-residue chain is Molybdopterin synthase sulfur carrier subunit (90 aa).

Gly90 carries the 1-thioglycine; alternate modification. The residue at position 90 (Gly90) is a Glycyl adenylate; alternate.

It belongs to the MoaD family. MOCS2A subfamily. As to quaternary structure, heterotetramer; composed of 2 small (Mocs2A) and 2 large (Mocs2B) subunits. C-terminal thiocarboxylation occurs in 2 steps, it is first acyl-adenylated (-COAMP) via the hesA/moeB/thiF part of MOCS3, then thiocarboxylated (-COSH) via the rhodanese domain of MOCS3.

Its subcellular location is the cytoplasm. The protein operates within cofactor biosynthesis; molybdopterin biosynthesis. Its function is as follows. Acts as a sulfur carrier required for molybdopterin biosynthesis. Component of the molybdopterin synthase complex that catalyzes the conversion of precursor Z into molybdopterin by mediating the incorporation of 2 sulfur atoms into precursor Z to generate a dithiolene group. In the complex, serves as sulfur donor by being thiocarboxylated (-COSH) at its C-terminus by MOCS3. After interaction with Mocs2B, the sulfur is then transferred to precursor Z to form molybdopterin. The chain is Molybdopterin synthase sulfur carrier subunit from Drosophila erecta (Fruit fly).